The chain runs to 1169 residues: Transcription-repair-coupling factor (1169 aa).

The Helicase ATP-binding domain maps to 634-795 (DMERARPMDR…MLGVRDLSVI (162 aa)). 647 to 654 (GDVGYGKT) provides a ligand contact to ATP. The DEEQ box motif lies at 748–751 (DEEQ). A Helicase C-terminal domain is found at 809 to 970 (VLEQNTNFIK…GFKIAMRDLN (162 aa)).

It in the N-terminal section; belongs to the UvrB family. This sequence in the C-terminal section; belongs to the helicase family. RecG subfamily.

It localises to the cytoplasm. In terms of biological role, couples transcription and DNA repair by recognizing RNA polymerase (RNAP) stalled at DNA lesions. Mediates ATP-dependent release of RNAP and its truncated transcript from the DNA, and recruitment of nucleotide excision repair machinery to the damaged site. The polypeptide is Transcription-repair-coupling factor (Staphylococcus epidermidis (strain ATCC 12228 / FDA PCI 1200)).